The sequence spans 1208 residues: Defective chorion protein, FC125 isoform (1208 aa).

A signal peptide spans 1-19; that stretch reads MRLFSLLPLLALLVVQAAG. 3 disordered regions span residues 23–60, 184–212, and 268–294; these read VTSDDPATDAGSTTNSTTDTKPRIPSQDEILGQMPSIN, APAPAPAAAPPPAPAPAADPPAAPVPDAP, and PAQPAAAGTDAQASDISEVRVRPEDPY. Polar residues predominate over residues 32–41; the sequence is AGSTTNSTTD. Residues 268 to 280 are compositionally biased toward low complexity; it reads PAQPAAAGTDAQA. Tandem repeats lie at residues 493–518, 519–544, 545–570, 571–596, and 597–622. The 12 X 26 AA approximate tandem repeats, Glu, Met-rich stretch occupies residues 493–788; it reads QNPMMMQQRQ…IQQQQRQMMQ (296 aa). The stretch at 623–652 is one 6; approximate repeat; that stretch reads QNPMMMQQRQWSEEQAKIQHDQQMAQQMAQ. The 7; approximate repeat unit spans residues 653–680; sequence QGLMMTEQRQRQWSEDQAKIQQAQQMAQ. An 8; approximate repeat occupies 681–696; the sequence is QTPMMMPQMQQRQWTE. A 9; approximate repeat occupies 697–720; sequence DPQMVQQMQQRQWAEDQTRMQMAQ. A 10; approximate repeat occupies 721–733; it reads QNPMMQQQRQMAE. One copy of the 11; approximate repeat lies at 734–758; sequence NPQMMQQRQWSEEQTKIEQAQQMAQ. The stretch at 759 to 788 is one 12; approximate repeat; sequence QNQMMMQQMQQRQWSEDQAQIQQQQRQMMQ. Residues 828–839 show a composition bias toward acidic residues; that stretch reads EDEDNKAEDDLV. 3 disordered regions span residues 828-875, 944-1010, and 1114-1208; these read EDED…SKSA, RTIN…GSIF, and VQPP…DVDD. The span at 957–977 shows a compositional bias: polar residues; sequence SESQKSNSNPPTTLTPAPQEQ. 2 stretches are compositionally biased toward acidic residues: residues 1163–1178 and 1194–1208; these read PEPDEEDDRDVEEPSE and NDIDYFNFDDDDVDD.

The protein resides in the secreted. Functionally, required for proper assembly of the eggshell. This is Defective chorion protein, FC125 isoform from Drosophila melanogaster (Fruit fly).